We begin with the raw amino-acid sequence, 218 residues long: Small ribosomal subunit protein uS3c (218 aa).

The region spanning 47-118 is the KH type-2 domain; that stretch reads VQKNIRISSG…KLNIAITRIS (72 aa).

This sequence belongs to the universal ribosomal protein uS3 family. Part of the 30S ribosomal subunit.

It is found in the plastid. The protein localises to the chloroplast. The protein is Small ribosomal subunit protein uS3c (rps3) of Barbarea verna (Land cress).